We begin with the raw amino-acid sequence, 326 residues long: Heat-inducible transcription repressor HrcA (326 aa).

The protein belongs to the HrcA family.

Its function is as follows. Negative regulator of class I heat shock genes (grpE-dnaK-dnaJ and groELS operons). Prevents heat-shock induction of these operons. The sequence is that of Heat-inducible transcription repressor HrcA from Staphylococcus saprophyticus subsp. saprophyticus (strain ATCC 15305 / DSM 20229 / NCIMB 8711 / NCTC 7292 / S-41).